A 185-amino-acid chain; its full sequence is MVKLGNNFSEKSTKQPLLEDGFDTIPLITPLDVNQLQFPPPDKVVVKTKTEYEPDRKKGKFRTPKIAEFTISITEGVSERFKVTVLVLFALAFLTCVVFLVVYKVYKYDHTCPEGFVFKNNQCIPAGLENYYSEQDSNARGKFYTVINHYNLAKQTITRSVSPWMTVLSEEKLSEQETEAAEKSA.

Topologically, residues 1-82 (MVKLGNNFSE…ITEGVSERFK (82 aa)) are cytoplasmic. The chain crosses the membrane as a helical; Signal-anchor for type II membrane protein span at residues 83-103 (VTVLVLFALAFLTCVVFLVVY). Residues 104 to 185 (KVYKYDHTCP…QETEAAEKSA (82 aa)) are Lumenal-facing.

This sequence belongs to the NSG family.

The protein resides in the membrane. The protein localises to the golgi apparatus. It localises to the trans-Golgi network membrane. Its subcellular location is the endosome membrane. It is found in the cell projection. The protein resides in the dendrite. The protein localises to the early endosome membrane. It localises to the late endosome membrane. Its subcellular location is the lysosome lumen. It is found in the recycling endosome membrane. The protein resides in the cytoplasmic vesicle membrane. The protein localises to the golgi stack membrane. It localises to the endosome. Its subcellular location is the multivesicular body membrane. Plays a role in the recycling mechanism in neurons of multiple receptors and acts at the level of early endosomes to promote sorting of receptors toward a recycling pathway. This is Neuronal vesicle trafficking-associated protein 1 from Gallus gallus (Chicken).